The chain runs to 317 residues: Melanocyte-stimulating hormone receptor (317 aa).

Residues 1 to 37 (MPVQGSQRRLLGSLNSTPTATPHLGLAANQTGARCLE) are Extracellular-facing. A glycan (N-linked (GlcNAc...) asparagine) is linked at Asn29. The helical transmembrane segment at 38–63 (VSIPDGLFLSLGLVSLVENVLVVTAI) threads the bilayer. The Cytoplasmic portion of the chain corresponds to 64–72 (AKNRNLHSP). The chain crosses the membrane as a helical span at residues 73–93 (MYCFICCLALSDLLVSGSNML). The Extracellular segment spans residues 94-118 (ETAVTLLLEAGALAARAAVVQQLDN). The helical transmembrane segment at 119–140 (VIDVITCSSMLSSLCFLGAIAV) threads the bilayer. The Cytoplasmic portion of the chain corresponds to 141–163 (DRYISIFYALRYHSIVTLPRARR). The helical transmembrane segment at 164–183 (AVAAIWVASVLFSMLFIAYY) threads the bilayer. The Extracellular portion of the chain corresponds to 184-191 (DHAAVLLC). The helical transmembrane segment at 192–211 (LVVFFLAMLVLMAVLYVHML) threads the bilayer. Residues 212 to 240 (ARACQHAQGIARLHKRQRPAHQGFGLKGA) are Cytoplasmic-facing. A helical membrane pass occupies residues 241–266 (ATLTILLGIFFLCWGPFFLHLTLIVL). Residues 267–279 (CPQHPTCSCIFKN) are Extracellular-facing. Residues 280–300 (FNLFLALIICNAIIDPLIYAF) form a helical membrane-spanning segment. Over 301 to 317 (RSQELRRTLKEVLLCSW) the chain is Cytoplasmic. Residue Cys315 is the site of S-palmitoyl cysteine attachment.

This sequence belongs to the G-protein coupled receptor 1 family. As to quaternary structure, interacts with MGRN1, but does not undergo MGRN1-mediated ubiquitination; this interaction competes with GNAS-binding and thus inhibits agonist-induced cAMP production. Interacts with OPN3; the interaction results in a decrease in MC1R-mediated cAMP signaling and ultimately a decrease in melanin production in melanocytes.

It localises to the cell membrane. Functionally, receptor for MSH (alpha, beta and gamma) and ACTH. The activity of this receptor is mediated by G proteins which activate adenylate cyclase. Mediates melanogenesis, the production of eumelanin (black/brown) and phaeomelanin (red/yellow), via regulation of cAMP signaling in melanocytes. In Miopithecus talapoin (Angolan talapoin), this protein is Melanocyte-stimulating hormone receptor (MC1R).